The primary structure comprises 164 residues: HTH-type transcriptional regulator IscR (164 aa).

An HTH rrf2-type domain is found at 2–131 (RLTSKGRYAV…SSISLEELVN (130 aa)). The H-T-H motif DNA-binding region spans 28-51 (LADISERQGISLSYLEQLFSRLRK). [2Fe-2S] cluster-binding residues include Cys92, Cys98, and Cys104. Positions 141–164 (RQDNDKRRAPNGRAQETINVNLRP) are disordered. Residues 154-164 (AQETINVNLRP) are compositionally biased toward polar residues.

[2Fe-2S] cluster is required as a cofactor.

Its function is as follows. Regulates the transcription of several operons and genes involved in the biogenesis of Fe-S clusters and Fe-S-containing proteins. The chain is HTH-type transcriptional regulator IscR from Photorhabdus laumondii subsp. laumondii (strain DSM 15139 / CIP 105565 / TT01) (Photorhabdus luminescens subsp. laumondii).